A 466-amino-acid polypeptide reads, in one-letter code: Chromosomal replication initiator protein DnaA (466 aa).

Residues 1–86 (MSLSLWQQCL…EVGTKPVTQT (86 aa)) are domain I, interacts with DnaA modulators. The segment at 86–129 (TLKTPVHNVVAPAQTTTAQPQRVAPAARSGWDNVPAPAEPTYRS) is domain II. Residues 130 to 346 (NVNVKHTFDN…GALNRVIANA (217 aa)) are domain III, AAA+ region. Positions 174, 176, 177, and 178 each coordinate ATP. A domain IV, binds dsDNA region spans residues 347–466 (NFTGRAITID…FSNLIRTLSS (120 aa)).

The protein belongs to the DnaA family. In terms of assembly, oligomerizes as a right-handed, spiral filament on DNA at oriC.

The protein resides in the cytoplasm. Its function is as follows. Plays an essential role in the initiation and regulation of chromosomal replication. ATP-DnaA binds to the origin of replication (oriC) to initiate formation of the DNA replication initiation complex once per cell cycle. Binds the DnaA box (a 9 base pair repeat at the origin) and separates the double-stranded (ds)DNA. Forms a right-handed helical filament on oriC DNA; dsDNA binds to the exterior of the filament while single-stranded (ss)DNA is stabiized in the filament's interior. The ATP-DnaA-oriC complex binds and stabilizes one strand of the AT-rich DNA unwinding element (DUE), permitting loading of DNA polymerase. After initiation quickly degrades to an ADP-DnaA complex that is not apt for DNA replication. Binds acidic phospholipids. This is Chromosomal replication initiator protein DnaA from Salmonella agona (strain SL483).